The sequence spans 266 residues: Ribosomal RNA small subunit methyltransferase A (266 aa).

S-adenosyl-L-methionine is bound by residues N11, L13, G37, E57, D85, and N104.

Belongs to the class I-like SAM-binding methyltransferase superfamily. rRNA adenine N(6)-methyltransferase family. RsmA subfamily.

The protein localises to the cytoplasm. It catalyses the reaction adenosine(1518)/adenosine(1519) in 16S rRNA + 4 S-adenosyl-L-methionine = N(6)-dimethyladenosine(1518)/N(6)-dimethyladenosine(1519) in 16S rRNA + 4 S-adenosyl-L-homocysteine + 4 H(+). In terms of biological role, specifically dimethylates two adjacent adenosines (A1518 and A1519) in the loop of a conserved hairpin near the 3'-end of 16S rRNA in the 30S particle. May play a critical role in biogenesis of 30S subunits. This is Ribosomal RNA small subunit methyltransferase A from Campylobacter jejuni (strain RM1221).